Reading from the N-terminus, the 76-residue chain is Acyl carrier protein (76 aa).

One can recognise a Carrier domain in the interval 1-76 (MSIEERVKKI…SAIDYVQNNQ (76 aa)). Residue Ser36 is modified to O-(pantetheine 4'-phosphoryl)serine.

The protein belongs to the acyl carrier protein (ACP) family. In terms of processing, 4'-phosphopantetheine is transferred from CoA to a specific serine of apo-ACP by AcpS. This modification is essential for activity because fatty acids are bound in thioester linkage to the sulfhydryl of the prosthetic group.

The protein localises to the cytoplasm. It participates in lipid metabolism; fatty acid biosynthesis. Carrier of the growing fatty acid chain in fatty acid biosynthesis. The polypeptide is Acyl carrier protein (Mannheimia succiniciproducens (strain KCTC 0769BP / MBEL55E)).